The following is a 149-amino-acid chain: Calmodulin-like protein (149 aa).

EF-hand domains lie at 6–41 (TTQA…VGSN), 42–76 (PTQQ…KMKY), 78–113 (DSEA…IGEK), and 113–148 (KLTK…SKSF). Ca(2+)-binding residues include D19, D21, D23, K25, and E30.

Belongs to the calmodulin family.

The protein resides in the contractile vacuole. Its function is as follows. Mediates the control of a large number of enzymes, ion channels and other proteins by Ca(2+) ions. Among the enzymes to be stimulated by the calmodulin-Ca(2+) complex are a number of protein kinases and phosphatases. This is Calmodulin-like protein (calB) from Dictyostelium discoideum (Social amoeba).